A 232-amino-acid polypeptide reads, in one-letter code: BTB/POZ domain-containing protein KCTD11 (232 aa).

Residues 1–49 (MLGAMFRAGTPMTPNLNPEGGGHYFIDRDGKAFRHILNFLRLGRLDLPL) form the BTB domain.

Homopentamer. Interacts with KCTD6 and KCTD21; KCTD11 and KCTD6 or KCTD21 may associate in pentameric assemblies. Component of the BCR(KCTD11) E3 ubiquitin ligase complex, at least composed of CUL3 and KCTD11 and RBX1. Interacts (via BTB domain) with CUL3; initially a 4:4 stoichiometry has been reported, however, electron microscopy revealed pentameric states of the BTB domain.

It participates in protein modification; protein ubiquitination. Its function is as follows. Plays a role as a marker and a regulator of neuronal differentiation; Up-regulated by a variety of neurogenic signals, such as retinoic acid, epidermal growth factor/EGF and NGFB/nerve growth factor. Induces apoptosis, growth arrest and the expression of cyclin-dependent kinase inhibitor CDKN1B. Plays a role as a tumor repressor and inhibits cell growth and tumorigenicity of medulloblastoma (MDB). Acts as a probable substrate-specific adapter for a BCR (BTB-CUL3-RBX1) E3 ubiquitin-protein ligase complex towards HDAC1. Functions as antagonist of the Hedgehog pathway on cell proliferation and differentiation by affecting the nuclear transfer of transcription factor GLI1, thus maintaining cerebellar granule cells in undifferentiated state, this effect probably occurs via HDAC1 down-regulation, keeping GLI1 acetylated and inactive. This Bos taurus (Bovine) protein is BTB/POZ domain-containing protein KCTD11 (KCTD11).